A 24-amino-acid chain; its full sequence is Fibrinogen gamma chain (24 aa).

Heterohexamer; disulfide linked. Contains 2 sets of 3 non-identical chains (alpha, beta and gamma). The 2 heterotrimers are in head to head conformation with the N-termini in a small central domain. Conversion of fibrinogen to fibrin is triggered by thrombin, which cleaves fibrinopeptides A and B from alpha and beta chains, and thus exposes the N-terminal polymerization sites responsible for the formation of the soft clot. The soft clot is converted into the hard clot by factor XIIIA which catalyzes the epsilon-(gamma-glutamyl)lysine cross-linking between gamma chains (stronger) and between alpha chains (weaker) of different monomers.

The protein resides in the secreted. Functionally, together with fibrinogen alpha (FGA) and fibrinogen beta (FGB), polymerizes to form an insoluble fibrin matrix. Has a major function in hemostasis as one of the primary components of blood clots. In addition, functions during the early stages of wound repair to stabilize the lesion and guide cell migration during re-epithelialization. Was originally thought to be essential for platelet aggregation, based on in vitro studies using anticoagulated blood. However, subsequent studies have shown that it is not absolutely required for thrombus formation in vivo. Enhances expression of SELP in activated platelets via an ITGB3-dependent pathway. Maternal fibrinogen is essential for successful pregnancy. Fibrin deposition is also associated with infection, where it protects against IFNG-mediated hemorrhage. May also facilitate the antibacterial immune response via both innate and T-cell mediated pathways. This Canis lupus familiaris (Dog) protein is Fibrinogen gamma chain (FGG).